We begin with the raw amino-acid sequence, 35 residues long: Cupiennin-2a (35 aa).

A Lysine amide modification is found at Lys-35.

In terms of tissue distribution, expressed by the venom gland.

It localises to the secreted. This is Cupiennin-2a from Cupiennius salei (American wandering spider).